Here is a 94-residue protein sequence, read N- to C-terminus: Small ribosomal subunit protein uS19 (94 aa).

It belongs to the universal ribosomal protein uS19 family.

In terms of biological role, protein S19 forms a complex with S13 that binds strongly to the 16S ribosomal RNA. The protein is Small ribosomal subunit protein uS19 of Syntrophomonas wolfei subsp. wolfei (strain DSM 2245B / Goettingen).